The chain runs to 600 residues: Elongation factor 4 (600 aa).

Positions 5–187 (KYIRNFSIIA…AIINKLPAPK (183 aa)) constitute a tr-type G domain. GTP contacts are provided by residues 17–22 (DHGKST) and 134–137 (NKID).

It belongs to the TRAFAC class translation factor GTPase superfamily. Classic translation factor GTPase family. LepA subfamily.

It localises to the cell inner membrane. The enzyme catalyses GTP + H2O = GDP + phosphate + H(+). Its function is as follows. Required for accurate and efficient protein synthesis under certain stress conditions. May act as a fidelity factor of the translation reaction, by catalyzing a one-codon backward translocation of tRNAs on improperly translocated ribosomes. Back-translocation proceeds from a post-translocation (POST) complex to a pre-translocation (PRE) complex, thus giving elongation factor G a second chance to translocate the tRNAs correctly. Binds to ribosomes in a GTP-dependent manner. The chain is Elongation factor 4 from Rickettsia prowazekii (strain Madrid E).